A 386-amino-acid chain; its full sequence is N-acetylneuraminate epimerase (386 aa).

The signal sequence occupies residues 1–29 (MGMQMKNFKKMMTLMALCFSVAITTSGYA). Kelch repeat units lie at residues 51 to 95 (VIYV…VFLN), 97 to 149 (ELYV…VKLN), 151 to 186 (TMVLITGGVNEHIFDKYFIDIAAAAADESEKNKVIY), 187 to 232 (NYFN…VMGN), 235 to 284 (LMLI…LAGA), 306 to 355 (QNYT…SYGD), and 357 to 386 (VFLIGGENAKGKPVSSVTSFTMRDGNLLIK). Residue Glu-241 is the Proton acceptor of the active site.

Belongs to the NanM family. In terms of assembly, homodimer.

Its subcellular location is the periplasm. It catalyses the reaction N-acetyl-alpha-neuraminate = N-acetyl-beta-neuraminate. In terms of biological role, converts alpha-N-acetylneuranimic acid (Neu5Ac) to the beta-anomer, accelerating the equilibrium between the alpha- and beta-anomers. Probably facilitates sialidase-negative bacteria to compete successfully for limited amounts of extracellular Neu5Ac, which is likely taken up in the beta-anomer. In addition, the rapid removal of sialic acid from solution might be advantageous to the bacterium to damp down host responses. This chain is N-acetylneuraminate epimerase, found in Salmonella typhimurium (strain LT2 / SGSC1412 / ATCC 700720).